The primary structure comprises 295 residues: Biliverdin reductase A (295 aa).

Residues Met1–Ser2 constitute a propeptide that is removed on maturation. NAD(+)-binding positions include Arg18–Ala19, Ser76–His79, and Tyr97. Phosphoserine is present on Ser154. Ser167 is an NAD(+) binding site. At Thr173 the chain carries Phosphothreonine. Ser177 and Ser229 each carry phosphoserine. An N6-acetyllysine mark is found at Lys247 and Lys252. Residues His279, Cys280, Cys291, and His292 each contribute to the Zn(2+) site.

Belongs to the Gfo/Idh/MocA family. Biliverdin reductase subfamily. In terms of assembly, monomer. It depends on Zn(2+) as a cofactor.

It is found in the cytoplasm. The protein resides in the cytosol. The enzyme catalyses (4Z,15Z)-bilirubin IXalpha + NAD(+) = biliverdin IXalpha + NADH + H(+). It catalyses the reaction (4Z,15Z)-bilirubin IXalpha + NADP(+) = biliverdin IXalpha + NADPH + H(+). Its pathway is porphyrin-containing compound metabolism; protoheme degradation. Functionally, reduces the gamma-methene bridge of the open tetrapyrrole, biliverdin IXalpha, to bilirubin with the concomitant oxidation of a NADH or NADPH cofactor. Does not reduce bilirubin IXbeta. Uses the reactants NADH or NADPH depending on the pH; NADH is used at the acidic pH range (6-6.9) and NADPH at the alkaline range (8.5-8.7). NADPH, however, is the probable reactant in biological systems. The chain is Biliverdin reductase A from Mus musculus (Mouse).